Consider the following 298-residue polypeptide: Tyrosine recombinase XerC (298 aa).

Positions 1–84 constitute a Core-binding (CB) domain; the sequence is MNHIQEAFLN…TLRTFYEYWM (84 aa). Residues 105–286 enclose the Tyr recombinase domain; it reads YLPQFFYEEE…SNQQLRKVYL (182 aa). Residues Arg-145, Lys-169, His-238, Arg-241, and His-264 contribute to the active site. The O-(3'-phospho-DNA)-tyrosine intermediate role is filled by Tyr-273.

The protein belongs to the 'phage' integrase family. XerC subfamily. As to quaternary structure, forms a cyclic heterotetrameric complex composed of two molecules of XerC and two molecules of XerD.

It localises to the cytoplasm. In terms of biological role, site-specific tyrosine recombinase, which acts by catalyzing the cutting and rejoining of the recombining DNA molecules. The XerC-XerD complex is essential to convert dimers of the bacterial chromosome into monomers to permit their segregation at cell division. It also contributes to the segregational stability of plasmids. The chain is Tyrosine recombinase XerC from Staphylococcus aureus (strain MSSA476).